Consider the following 369-residue polypeptide: Prenyltransferase malB (369 aa).

Glu-87 provides a ligand contact to substrate. Residues Arg-100 and Tyr-189 each coordinate dimethylallyl diphosphate. Substrate is bound at residue Tyr-191.

It belongs to the tryptophan dimethylallyltransferase family.

Functionally, prenyltransferase; part of the gene cluster that mediates the biosynthesis of malbrancheamide, a dichlorinated fungal indole alkaloid that belongs to a family of natural products containing a characteristic bicyclo[2.2.2]diazaoctane core. The first step of malbrancheamide biosynthesis involves coupling of L-proline and L-tryptophan by malG, a bimodular NRPS, to produce L-Pro-L-Trp aldehyde through reductive offloading. This compound undergoes spontaneous cyclization and dehydration to give a dienamine which is reverse prenylated at C-2 by malE. The other prenyltransferase present in the cluster, malB, displays modest activity, suggesting that may be a redundant gene in the pathway. Subsequently, a [4+2] Diels-Alder cyclo-addition catalyzed by the bifunctional enzyme malC forms the characteristic bicyclo[2.2.2]diazaoctane ring of premalbrancheamid. Finally, the flavin-dependent halogenase malA catalyzes the iterative dichlorination of the indole ring of premalbrancheamide to yield C-9 monochlorinated malbrancheamide B, C-8 monochlorinated isomalbrancheamide B, and dichlorinated malbrancheamide. MalA is also able to brominate premalbrancheamide at C-9 to yield malbrancheamide C, and, to a lesser extend, at C-8 to yield isomalbrancheamide C. Finally, malA can brominate C-9 monochlorinated malbrancheamide B at C-8 to yield malbrancheamide D, or C-8 monochlorinated isomalbrancheamide B at C-9 to produce isomalbrancheamide D. This Malbranchea aurantiaca protein is Prenyltransferase malB.